The following is a 470-amino-acid chain: Rhamnulokinase (470 aa).

12-16 is an ATP binding site; sequence ASSGR. Substrate-binding positions include alanine 80 and 237 to 239; that span reads HDT. Aspartate 238 functions as the Proton acceptor in the catalytic mechanism. Position 259 (threonine 259) interacts with ATP. Asparagine 296 contributes to the substrate binding site. An ATP-binding site is contributed by glutamine 304. Cysteine 353 and cysteine 370 are joined by a disulfide. Glycine 402 is an ATP binding site.

Belongs to the rhamnulokinase family. Mg(2+) serves as cofactor.

The enzyme catalyses L-rhamnulose + ATP = L-rhamnulose 1-phosphate + ADP + H(+). It participates in carbohydrate degradation; L-rhamnose degradation; glycerone phosphate from L-rhamnose: step 2/3. Functionally, involved in the catabolism of L-rhamnose (6-deoxy-L-mannose). Catalyzes the transfer of the gamma-phosphate group from ATP to the 1-hydroxyl group of L-rhamnulose to yield L-rhamnulose 1-phosphate. This chain is Rhamnulokinase, found in Oceanobacillus iheyensis (strain DSM 14371 / CIP 107618 / JCM 11309 / KCTC 3954 / HTE831).